A 600-amino-acid chain; its full sequence is Elongation factor 4 (600 aa).

The region spanning 4 to 187 is the tr-type G domain; it reads KYIRNFSIVA…AIIEQIPPPL (184 aa). GTP contacts are provided by residues 16–21 and 134–137; these read DHGKST and NKID.

This sequence belongs to the TRAFAC class translation factor GTPase superfamily. Classic translation factor GTPase family. LepA subfamily.

Its subcellular location is the cell membrane. The enzyme catalyses GTP + H2O = GDP + phosphate + H(+). Its function is as follows. Required for accurate and efficient protein synthesis under certain stress conditions. May act as a fidelity factor of the translation reaction, by catalyzing a one-codon backward translocation of tRNAs on improperly translocated ribosomes. Back-translocation proceeds from a post-translocation (POST) complex to a pre-translocation (PRE) complex, thus giving elongation factor G a second chance to translocate the tRNAs correctly. Binds to ribosomes in a GTP-dependent manner. The polypeptide is Elongation factor 4 (Malacoplasma penetrans (strain HF-2) (Mycoplasma penetrans)).